A 481-amino-acid chain; its full sequence is Phospho-2-dehydro-3-deoxyheptonate aldolase (481 aa).

Positions 1–22 (MSQQTTPNAPGWAPDSWRSKPI) are disordered.

It belongs to the class-II DAHP synthase family. Homodimer. Post-translationally, the N-terminus is blocked.

It catalyses the reaction D-erythrose 4-phosphate + phosphoenolpyruvate + H2O = 7-phospho-2-dehydro-3-deoxy-D-arabino-heptonate + phosphate. It participates in metabolic intermediate biosynthesis; chorismate biosynthesis; chorismate from D-erythrose 4-phosphate and phosphoenolpyruvate: step 1/7. This chain is Phospho-2-dehydro-3-deoxyheptonate aldolase (aro-8), found in Neurospora crassa (strain ATCC 24698 / 74-OR23-1A / CBS 708.71 / DSM 1257 / FGSC 987).